A 133-amino-acid polypeptide reads, in one-letter code: Small ribosomal subunit protein uS19 (133 aa).

This sequence belongs to the universal ribosomal protein uS19 family.

Protein S19 forms a complex with S13 that binds strongly to the 16S ribosomal RNA. In Thermococcus gammatolerans (strain DSM 15229 / JCM 11827 / EJ3), this protein is Small ribosomal subunit protein uS19.